Reading from the N-terminus, the 444-residue chain is Xylose isomerase (444 aa).

Mg(2+) is bound by residues aspartate 307 and aspartate 309.

It belongs to the xylose isomerase family. As to quaternary structure, homotetramer. Mg(2+) serves as cofactor.

Its subcellular location is the cytoplasm. It carries out the reaction alpha-D-xylose = alpha-D-xylulofuranose. The chain is Xylose isomerase from Thermotoga neapolitana (strain ATCC 49049 / DSM 4359 / NBRC 107923 / NS-E).